The chain runs to 90 residues: Probable Fe(2+)-trafficking protein (90 aa).

It belongs to the Fe(2+)-trafficking protein family. In terms of assembly, monomer.

Could be a mediator in iron transactions between iron acquisition and iron-requiring processes, such as synthesis and/or repair of Fe-S clusters in biosynthetic enzymes. This is Probable Fe(2+)-trafficking protein from Yersinia pseudotuberculosis serotype O:1b (strain IP 31758).